Consider the following 570-residue polypeptide: Potassium-transporting ATPase potassium-binding subunit (570 aa).

11 helical membrane-spanning segments follow: residues 7 to 27, 65 to 85, 95 to 115, 135 to 155, 179 to 199, 254 to 274, 286 to 306, 383 to 403, 422 to 442, 489 to 509, and 528 to 548; these read AEIALTLSLAVAIGWPLGVFL, AYALALLAFNLIGFVFVYAVL, PQGFPGLSGHLAFNTAISFIT, LVLTVQNFVSAATGATVAAAL, LYLLLPLAFVVAVVLAALGLP, LTNLITAISINTLGWAAFFAF, ALVIAAFVLLFAGAVGVYATE, GVAIMVVMALLSVFVAGLMVG, ILAVVIIPLSMLGFSGIAAVL, LGIAMAMGRFMPIVAVLAIAG, and GGLFIGLLIGVILILGGLQFF.

It belongs to the KdpA family. The system is composed of three essential subunits: KdpA, KdpB and KdpC.

The protein localises to the cell inner membrane. Functionally, part of the high-affinity ATP-driven potassium transport (or Kdp) system, which catalyzes the hydrolysis of ATP coupled with the electrogenic transport of potassium into the cytoplasm. This subunit binds the periplasmic potassium ions and delivers the ions to the membrane domain of KdpB through an intramembrane tunnel. This Caulobacter vibrioides (strain ATCC 19089 / CIP 103742 / CB 15) (Caulobacter crescentus) protein is Potassium-transporting ATPase potassium-binding subunit.